The sequence spans 105 residues: Toxin ParE2 (105 aa).

Belongs to the RelE toxin family.

Its function is as follows. Toxic component of a type II toxin-antitoxin (TA) system. Its toxic effect is neutralized by coexpression with cognate antitoxin ParD2. This is Toxin ParE2 (parE2) from Mycobacterium tuberculosis (strain CDC 1551 / Oshkosh).